Consider the following 240-residue polypeptide: Uridylate kinase (240 aa).

12–15 is an ATP binding site; sequence KISG. The interval 20 to 25 is involved in allosteric activation by GTP; the sequence is GNQGFG. Gly-54 is a binding site for UMP. Residues Gly-55 and Arg-59 each coordinate ATP. Residues Asp-74 and 135–142 each bind UMP; that span reads TGNPYFST. ATP is bound by residues Tyr-168 and Asp-171.

The protein belongs to the UMP kinase family. As to quaternary structure, homohexamer.

The protein resides in the cytoplasm. The enzyme catalyses UMP + ATP = UDP + ADP. The protein operates within pyrimidine metabolism; CTP biosynthesis via de novo pathway; UDP from UMP (UMPK route): step 1/1. With respect to regulation, allosterically activated by GTP. Inhibited by UTP. Functionally, catalyzes the reversible phosphorylation of UMP to UDP. In Moorella thermoacetica (strain ATCC 39073 / JCM 9320), this protein is Uridylate kinase.